The sequence spans 473 residues: Adenosylhomocysteinase (473 aa).

Positions 64, 139, and 199 each coordinate substrate. Residue 200 to 202 (TTT) participates in NAD(+) binding. Lys-229 and Asp-233 together coordinate substrate. NAD(+) contacts are provided by residues Asn-234, 263–268 (GYGDVG), Glu-286, Asn-321, 342–344 (IGH), and Asn-387.

The protein belongs to the adenosylhomocysteinase family. It depends on NAD(+) as a cofactor.

Its subcellular location is the cytoplasm. The enzyme catalyses S-adenosyl-L-homocysteine + H2O = L-homocysteine + adenosine. It participates in amino-acid biosynthesis; L-homocysteine biosynthesis; L-homocysteine from S-adenosyl-L-homocysteine: step 1/1. In terms of biological role, may play a key role in the regulation of the intracellular concentration of adenosylhomocysteine. The chain is Adenosylhomocysteinase from Burkholderia mallei (strain SAVP1).